Consider the following 187-residue polypeptide: Putative manganese efflux pump MntP (187 aa).

6 helical membrane passes run 3 to 23 (WLTILGISVALAMDAFAVALA), 39 to 59 (LGFHFGLFQALMPIGGWLLGM), 65 to 85 (ISAYDHWIAFGLLVFVGGRMV), 103 to 123 (GMTMVMLSVATSIDAFAVGLS), 124 to 144 (IAMLGVSVWLPATVIGLVAGV), and 166 to 186 (ICGGLVLCLIGLKILLEHTLL).

This sequence belongs to the MntP (TC 9.B.29) family.

Its subcellular location is the cell inner membrane. Probably functions as a manganese efflux pump. This is Putative manganese efflux pump MntP from Geobacter sp. (strain M21).